The sequence spans 239 residues: MAIALWYCPPQGSVAYETLQMLIFSFQTLFPDSPVFEPHVTVTSHLVCNSKDDVNKILTSCVAAIQSIRSHQTAKKGRKGQVSHAVAAPLVSFNGCSVGKQYFKKIVLECNKNKILYGVAQVMREMYVEIDPETRSSRAATWVHEEFHPHVSLLYSDIHPVSQASLRVVQQRIEDALDVQLVPREKRKGSGNADGSNEVQMRWDFDVSSSLSWNIPGTFKVVNCVGPVQEWEVLGRVDV.

Catalysis depends on proton donor/acceptor residues histidine 39 and histidine 150.

This sequence belongs to the 2H phosphoesterase superfamily. CPD1 family.

The protein localises to the golgi apparatus. The catalysed reaction is ADP-alpha-D-ribose 1'',2''-cyclic phosphate + H2O = ADP-alpha-D-ribose 1''-phosphate + H(+). It carries out the reaction 2',3'-cyclophospho-AMP + H2O = adenosine 2'-phosphate + H(+). It catalyses the reaction 2',3'-cyclophospho-GMP + H2O = guanosine 2'-phosphate + H(+). The enzyme catalyses 2',3'-cyclophospho-UMP + H2O = uridine 2'-phosphate + H(+). The catalysed reaction is 2',3'-cyclophospho-CMP + H2O = cytidine 2'-phosphate + H(+). It carries out the reaction a nucleoside 2',3'-cyclic phosphate + H2O = a nucleoside 2'-phosphate + H(+). Its function is as follows. Involved in the metabolism of ADP-ribose 1',2'-cyclic phosphate which is produced as a consequence of tRNA splicing. The sequence is that of 2',3'-cyclic-nucleotide 3'-phosphodiesterase from Saccharomyces cerevisiae (strain ATCC 204508 / S288c) (Baker's yeast).